The sequence spans 326 residues: Fructose-1,6-bisphosphatase class 1 2 (326 aa).

E84, D103, L105, and D106 together coordinate Mg(2+). Residues 106 to 109 (DGSS), N198, and K262 contribute to the substrate site. A Mg(2+)-binding site is contributed by E268.

The protein belongs to the FBPase class 1 family. In terms of assembly, homotetramer. Requires Mg(2+) as cofactor.

The protein resides in the cytoplasm. It catalyses the reaction beta-D-fructose 1,6-bisphosphate + H2O = beta-D-fructose 6-phosphate + phosphate. Its pathway is carbohydrate biosynthesis; gluconeogenesis. This Pseudoalteromonas translucida (strain TAC 125) protein is Fructose-1,6-bisphosphatase class 1 2.